A 39-amino-acid polypeptide reads, in one-letter code: Photosystem II reaction center protein L (39 aa).

A helical transmembrane segment spans residues 18-38 (SLYWGLLLIFVLAVLFSNYFF).

Belongs to the PsbL family. In terms of assembly, PSII is composed of 1 copy each of membrane proteins PsbA, PsbB, PsbC, PsbD, PsbE, PsbF, PsbH, PsbI, PsbJ, PsbK, PsbL, PsbM, PsbT, PsbX, PsbY, PsbZ, Psb30/Ycf12, at least 3 peripheral proteins of the oxygen-evolving complex and a large number of cofactors. It forms dimeric complexes.

The protein localises to the plastid thylakoid membrane. One of the components of the core complex of photosystem II (PSII). PSII is a light-driven water:plastoquinone oxidoreductase that uses light energy to abstract electrons from H(2)O, generating O(2) and a proton gradient subsequently used for ATP formation. It consists of a core antenna complex that captures photons, and an electron transfer chain that converts photonic excitation into a charge separation. This subunit is found at the monomer-monomer interface and is required for correct PSII assembly and/or dimerization. The sequence is that of Photosystem II reaction center protein L from Cuscuta gronovii (Common dodder).